Consider the following 359-residue polypeptide: DNA integrity scanning protein DisA (359 aa).

A DAC domain is found at 7 to 145 (DDIFRATLAA…AGRRYVLDGA (139 aa)). ATP-binding positions include Gly74, Leu92, and 105 to 109 (TRHRT).

Belongs to the DisA family. In terms of assembly, homooctamer. Requires Mg(2+) as cofactor.

The catalysed reaction is 2 ATP = 3',3'-c-di-AMP + 2 diphosphate. Its function is as follows. Participates in a DNA-damage check-point that is active prior to asymmetric division when DNA is damaged. DisA forms globular foci that rapidly scan along the chromosomes during sporulation, searching for lesions. When a lesion is present, DisA pauses at the lesion site. This triggers a cellular response that culminates in a temporary block in sporulation initiation. Also has diadenylate cyclase activity, catalyzing the condensation of 2 ATP molecules into cyclic di-AMP (c-di-AMP). c-di-AMP acts as a signaling molecule that couples DNA integrity with progression of sporulation. The rise in c-di-AMP level generated by DisA while scanning the chromosome, operates as a positive signal that advances sporulation; upon encountering a lesion, the DisA focus arrests at the damaged site and halts c-di-AMP synthesis. This chain is DNA integrity scanning protein DisA, found in Parafrankia sp. (strain EAN1pec).